The following is a 440-amino-acid chain: Thymidine phosphorylase (440 aa).

It belongs to the thymidine/pyrimidine-nucleoside phosphorylase family. Homodimer.

The catalysed reaction is thymidine + phosphate = 2-deoxy-alpha-D-ribose 1-phosphate + thymine. It participates in pyrimidine metabolism; dTMP biosynthesis via salvage pathway; dTMP from thymine: step 1/2. Functionally, the enzymes which catalyze the reversible phosphorolysis of pyrimidine nucleosides are involved in the degradation of these compounds and in their utilization as carbon and energy sources, or in the rescue of pyrimidine bases for nucleotide synthesis. The chain is Thymidine phosphorylase from Erwinia tasmaniensis (strain DSM 17950 / CFBP 7177 / CIP 109463 / NCPPB 4357 / Et1/99).